The primary structure comprises 171 residues: Crossover junction endodeoxyribonuclease RuvC (171 aa).

Residues D12, E72, and D144 contribute to the active site. The Mg(2+) site is built by D12, E72, and D144.

It belongs to the RuvC family. In terms of assembly, homodimer which binds Holliday junction (HJ) DNA. The HJ becomes 2-fold symmetrical on binding to RuvC with unstacked arms; it has a different conformation from HJ DNA in complex with RuvA. In the full resolvosome a probable DNA-RuvA(4)-RuvB(12)-RuvC(2) complex forms which resolves the HJ. It depends on Mg(2+) as a cofactor.

The protein localises to the cytoplasm. It carries out the reaction Endonucleolytic cleavage at a junction such as a reciprocal single-stranded crossover between two homologous DNA duplexes (Holliday junction).. Functionally, the RuvA-RuvB-RuvC complex processes Holliday junction (HJ) DNA during genetic recombination and DNA repair. Endonuclease that resolves HJ intermediates. Cleaves cruciform DNA by making single-stranded nicks across the HJ at symmetrical positions within the homologous arms, yielding a 5'-phosphate and a 3'-hydroxyl group; requires a central core of homology in the junction. The consensus cleavage sequence is 5'-(A/T)TT(C/G)-3'. Cleavage occurs on the 3'-side of the TT dinucleotide at the point of strand exchange. HJ branch migration catalyzed by RuvA-RuvB allows RuvC to scan DNA until it finds its consensus sequence, where it cleaves and resolves the cruciform DNA. This is Crossover junction endodeoxyribonuclease RuvC from Afipia carboxidovorans (strain ATCC 49405 / DSM 1227 / KCTC 32145 / OM5) (Oligotropha carboxidovorans).